Here is a 280-residue protein sequence, read N- to C-terminus: 2-dehydro-3-deoxyphosphooctonate aldolase (280 aa).

Belongs to the KdsA family.

The protein resides in the cytoplasm. It carries out the reaction D-arabinose 5-phosphate + phosphoenolpyruvate + H2O = 3-deoxy-alpha-D-manno-2-octulosonate-8-phosphate + phosphate. It participates in carbohydrate biosynthesis; 3-deoxy-D-manno-octulosonate biosynthesis; 3-deoxy-D-manno-octulosonate from D-ribulose 5-phosphate: step 2/3. It functions in the pathway bacterial outer membrane biogenesis; lipopolysaccharide biosynthesis. In Colwellia psychrerythraea (strain 34H / ATCC BAA-681) (Vibrio psychroerythus), this protein is 2-dehydro-3-deoxyphosphooctonate aldolase.